We begin with the raw amino-acid sequence, 212 residues long: uncharacterized protein (212 aa).

The signal sequence occupies residues 1–20 (MRRVLLCFLTLILLLPAASA).

This is an uncharacterized protein from Archaeoglobus fulgidus (strain ATCC 49558 / DSM 4304 / JCM 9628 / NBRC 100126 / VC-16).